The chain runs to 521 residues: Interleukin-9 receptor (521 aa).

The first 40 residues, 1–40, serve as a signal peptide directing secretion; the sequence is MGLGRCIWEGWTLESEALRRDMGTWLLACICICTCVCLGV. The Extracellular segment spans residues 41-270; the sequence is SVTGEGQGPR…GPLIPPWGWP (230 aa). Asn-117 and Asn-156 each carry an N-linked (GlcNAc...) asparagine glycan. Residues 149–259 form the Fibronectin type-III domain; the sequence is PPSDLQSNIS…QPVCFQAPQR (111 aa). The WSXWS motif motif lies at 245–249; it reads WSEWS. Residues 271–291 traverse the membrane as a helical segment; that stretch reads GNTLVAVSIFLLLTGPTYLLF. Over 292-521 the chain is Cytoplasmic; that stretch reads KLSPRVKRIF…VLSKARSWTF (230 aa). Residues 301–309 carry the Box 1 motif motif; the sequence is FYQNVPSPA. The tract at residues 413–439 is disordered; that stretch reads WAPTSLTRPAPPDSEGSRSSSSSSSSN. Residues 429-439 are compositionally biased toward low complexity; it reads SRSSSSSSSSN.

The protein belongs to the type I cytokine receptor family. Type 4 subfamily. Interacts with IL9.

It is found in the cell membrane. The protein resides in the secreted. Its function is as follows. Plays an important role in the immune response against parasites by acting as a receptor of IL9. This Homo sapiens (Human) protein is Interleukin-9 receptor (IL9R).